Here is a 567-residue protein sequence, read N- to C-terminus: Adenine deaminase (567 aa).

This sequence belongs to the metallo-dependent hydrolases superfamily. Adenine deaminase family. The cofactor is Mn(2+).

It carries out the reaction adenine + H2O + H(+) = hypoxanthine + NH4(+). This Methanothrix thermoacetophila (strain DSM 6194 / JCM 14653 / NBRC 101360 / PT) (Methanosaeta thermophila) protein is Adenine deaminase.